The sequence spans 335 residues: Nucleoid-associated protein YejK (335 aa).

This sequence belongs to the YejK family.

The protein resides in the cytoplasm. The protein localises to the nucleoid. The protein is Nucleoid-associated protein YejK of Shigella dysenteriae serotype 1 (strain Sd197).